The chain runs to 82 residues: RNA-binding protein BH0128 (82 aa).

This sequence belongs to the eukaryotic ribosomal protein eL8 family.

This chain is RNA-binding protein BH0128, found in Halalkalibacterium halodurans (strain ATCC BAA-125 / DSM 18197 / FERM 7344 / JCM 9153 / C-125) (Bacillus halodurans).